The primary structure comprises 184 residues: Heme transporter hrg-4 (184 aa).

A helical transmembrane segment spans residues 19-39; sequence IGWTIFGIVFGISAILTYAIK. Asn42 carries N-linked (GlcNAc...) asparagine glycosylation. The next 3 membrane-spanning stretches (helical) occupy residues 46–66, 87–107, and 124–146; these read TATTAIATLFACETLYLYWAL, VFIGLLGLLGCLVCYIIAGIT, and IYFSKFAAMYGENLWFTGSWSLV.

Belongs to the HRG family.

It localises to the cell membrane. Its function is as follows. Heme transporter that mediates heme uptake across the plasma membrane. This chain is Heme transporter hrg-4, found in Caenorhabditis elegans.